Reading from the N-terminus, the 375-residue chain is Dual-specificity RNA methyltransferase RlmN (375 aa).

The Proton acceptor role is filled by Glu-98. The region spanning 106–346 (GGKRRTLCVS…VRTTRGDDID (241 aa)) is the Radical SAM core domain. A disulfide bridge links Cys-113 with Cys-349. Residues Cys-120, Cys-124, and Cys-127 each coordinate [4Fe-4S] cluster. S-adenosyl-L-methionine-binding positions include 174 to 175 (GE), Ser-206, 228 to 230 (SLH), and Asn-306. Cys-349 acts as the S-methylcysteine intermediate in catalysis.

The protein belongs to the radical SAM superfamily. RlmN family. The cofactor is [4Fe-4S] cluster.

It localises to the cytoplasm. The catalysed reaction is adenosine(2503) in 23S rRNA + 2 reduced [2Fe-2S]-[ferredoxin] + 2 S-adenosyl-L-methionine = 2-methyladenosine(2503) in 23S rRNA + 5'-deoxyadenosine + L-methionine + 2 oxidized [2Fe-2S]-[ferredoxin] + S-adenosyl-L-homocysteine. It carries out the reaction adenosine(37) in tRNA + 2 reduced [2Fe-2S]-[ferredoxin] + 2 S-adenosyl-L-methionine = 2-methyladenosine(37) in tRNA + 5'-deoxyadenosine + L-methionine + 2 oxidized [2Fe-2S]-[ferredoxin] + S-adenosyl-L-homocysteine. Functionally, specifically methylates position 2 of adenine 2503 in 23S rRNA and position 2 of adenine 37 in tRNAs. m2A2503 modification seems to play a crucial role in the proofreading step occurring at the peptidyl transferase center and thus would serve to optimize ribosomal fidelity. The chain is Dual-specificity RNA methyltransferase RlmN from Chromohalobacter salexigens (strain ATCC BAA-138 / DSM 3043 / CIP 106854 / NCIMB 13768 / 1H11).